A 923-amino-acid chain; its full sequence is Neuropilin-1a (923 aa).

The N-terminal stretch at 1 to 19 is a signal peptide; sequence MHCGLVLILFTGIFLIVSA. Topologically, residues 20–856 are extracellular; sequence LKNDKCGDNI…AGNMLKTLDP (837 aa). 3 disulfide bridges follow: C25–C52, C80–C102, and C145–C171. CUB domains follow at residues 25–139 and 145–263; these read CGDN…YEIF and CSRN…FTVL. Residue N148 is glycosylated (N-linked (GlcNAc...) asparagine). Ca(2+) contacts are provided by E193, D207, and D248. C204 and C226 form a disulfide bridge. An N-linked (GlcNAc...) asparagine glycan is attached at N259. 2 cysteine pairs are disulfide-bonded: C273/C422 and C429/C581. 2 F5/8 type C domains span residues 273–422 and 429–581; these read CTEP…VYGC and CSGM…LLGC. A glycan (N-linked (GlcNAc...) asparagine) is linked at N520. A disordered region spans residues 587 to 624; that stretch reads TVPPTTPAASTTPSDECDDDQANCHSGTGDGYDQTGGT. S612 is a glycosylation site (O-linked (Xyl...) (chondroitin sulfate) serine; alternate). S612 is a glycosylation site (O-linked (Xyl...) (heparan sulfate) serine; alternate). The MAM domain maps to 642 to 811; sequence FACDFGWAND…DNVNMADCKD (170 aa). The chain crosses the membrane as a helical span at residues 857–877; that stretch reads ILITIIAMSALGVFLGAICGV. At 878–923 the chain is on the cytoplasmic side; that stretch reads VLYCACSHSGMSDRNLSALENYNFELVDGVKLKKDKLNSQNSYSEA.

It belongs to the neuropilin family.

The protein localises to the membrane. In terms of biological role, receptor involved in the development of the cardiovascular system, in angiogenesis, in the formation of certain neuronal circuits and in organogenesis outside the nervous system. It mediates the chemorepulsant activity of semaphorins. Regulates angiogenesis through a VEGF-dependent pathway. In Danio rerio (Zebrafish), this protein is Neuropilin-1a (nrp1a).